Reading from the N-terminus, the 126-residue chain is KVFEKCELSQMLKANGLDGFQGITLEEWICIAFHESGFDSRALNYYNGSSSHGLFQINRQYWCDGQDAKSTEPSVNACQISCDKLRDDDIEDDIKCVKKILKESQGITAWEAWQPFCIADLDQWKC.

Residues 1-126 (KVFEKCELSQ…CIADLDQWKC (126 aa)) form the C-type lysozyme domain. Intrachain disulfides connect cysteine 6/cysteine 126, cysteine 30/cysteine 117, cysteine 63/cysteine 82, and cysteine 78/cysteine 96. N-linked (GlcNAc...) asparagine glycosylation occurs at asparagine 47. Lysine 84, aspartate 87, aspartate 89, aspartate 92, and aspartate 93 together coordinate Ca(2+).

This sequence belongs to the glycosyl hydrolase 22 family. In terms of assembly, lactose synthase (LS) is a heterodimer of a catalytic component, beta1,4-galactosyltransferase (beta4Gal-T1) and a regulatory component, alpha-lactalbumin (LA). In terms of tissue distribution, mammary gland specific. Secreted in milk.

It is found in the secreted. Functionally, regulatory subunit of lactose synthase, changes the substrate specificity of galactosyltransferase in the mammary gland making glucose a good acceptor substrate for this enzyme. This enables LS to synthesize lactose, the major carbohydrate component of milk. In other tissues, galactosyltransferase transfers galactose onto the N-acetylglucosamine of the oligosaccharide chains in glycoproteins. The sequence is that of Alpha-lactalbumin (LALBA) from Tachyglossus aculeatus aculeatus (Southeast Australian short-beaked echidna).